The primary structure comprises 366 residues: Ribosomal RNA large subunit methyltransferase M (366 aa).

Residues Ser-188, 221–224, Asp-240, Asp-260, and Asp-277 contribute to the S-adenosyl-L-methionine site; that span reads CPGG. Catalysis depends on Lys-306, which acts as the Proton acceptor.

The protein belongs to the class I-like SAM-binding methyltransferase superfamily. RNA methyltransferase RlmE family. RlmM subfamily. As to quaternary structure, monomer.

It is found in the cytoplasm. It catalyses the reaction cytidine(2498) in 23S rRNA + S-adenosyl-L-methionine = 2'-O-methylcytidine(2498) in 23S rRNA + S-adenosyl-L-homocysteine + H(+). Catalyzes the 2'-O-methylation at nucleotide C2498 in 23S rRNA. The protein is Ribosomal RNA large subunit methyltransferase M of Sodalis glossinidius (strain morsitans).